The primary structure comprises 134 residues: uncharacterized protein (134 aa).

The protein resides in the mitochondrion. This is an uncharacterized protein from Saccharomyces cerevisiae (strain ATCC 204508 / S288c) (Baker's yeast).